Reading from the N-terminus, the 65-residue chain is Antimicrobial peptide THP1 (65 aa).

Positions 1–25 (MRIVYLLFPFILLLAQGAAGSSLAL) are cleaved as a signal peptide. Disulfide bonds link cysteine 31/cysteine 53, cysteine 38/cysteine 59, and cysteine 43/cysteine 60. Positions 61 to 65 (KTLLG) are excised as a propeptide.

Belongs to the beta-defensin family.

Its subcellular location is the secreted. In terms of biological role, bactericidal activity; inhibits S.aureus and E.coli. The sequence is that of Antimicrobial peptide THP1 from Meleagris gallopavo (Wild turkey).